The following is a 404-amino-acid chain: Cysteine desulfurase IscS (404 aa).

Residues 75-76, asparagine 155, glutamine 183, and 203-205 contribute to the pyridoxal 5'-phosphate site; these read AT and SAH. An N6-(pyridoxal phosphate)lysine modification is found at lysine 206. Threonine 243 contributes to the pyridoxal 5'-phosphate binding site. Cysteine 328 serves as the catalytic Cysteine persulfide intermediate. [2Fe-2S] cluster is bound at residue cysteine 328.

It belongs to the class-V pyridoxal-phosphate-dependent aminotransferase family. NifS/IscS subfamily. As to quaternary structure, homodimer. Forms a heterotetramer with IscU, interacts with other sulfur acceptors. Pyridoxal 5'-phosphate is required as a cofactor.

Its subcellular location is the cytoplasm. The enzyme catalyses (sulfur carrier)-H + L-cysteine = (sulfur carrier)-SH + L-alanine. The protein operates within cofactor biosynthesis; iron-sulfur cluster biosynthesis. Functionally, master enzyme that delivers sulfur to a number of partners involved in Fe-S cluster assembly, tRNA modification or cofactor biosynthesis. Catalyzes the removal of elemental sulfur atoms from cysteine to produce alanine. Functions as a sulfur delivery protein for Fe-S cluster synthesis onto IscU, an Fe-S scaffold assembly protein, as well as other S acceptor proteins. This is Cysteine desulfurase IscS from Pseudomonas fluorescens (strain Pf0-1).